The following is a 241-amino-acid chain: Prolactin-8A8 (241 aa).

Positions 1-30 (MELQFRQPHFSDALLLLLLSNLLLWEKASS) are cleaved as a signal peptide. 3 disulfides stabilise this stretch: C34/C41, C101/C217, and C234/C241. N213 is a glycosylation site (N-linked (GlcNAc...) asparagine).

It belongs to the somatotropin/prolactin family. Expressed specifically in the placenta. Predominantly expressed in spongiotrophoblast cells.

Its subcellular location is the secreted. This is Prolactin-8A8 (Prl8a8) from Mus musculus (Mouse).